The following is a 91-amino-acid chain: ATP synthase subunit c (91 aa).

2 helical membrane passes run 4 to 24 and 53 to 73; these read FTMCVLAAGIGMALGTLGTGI and IGLAMIESLAIYALVVCLIIL.

The protein belongs to the ATPase C chain family. In terms of assembly, F-type ATPases have 2 components, F(1) - the catalytic core - and F(0) - the membrane proton channel. F(1) has five subunits: alpha(3), beta(3), gamma(1), delta(1), epsilon(1). F(0) has three main subunits: a(1), b(2) and c(10-14). The alpha and beta chains form an alternating ring which encloses part of the gamma chain. F(1) is attached to F(0) by a central stalk formed by the gamma and epsilon chains, while a peripheral stalk is formed by the delta and b chains.

Its subcellular location is the cell inner membrane. Functionally, f(1)F(0) ATP synthase produces ATP from ADP in the presence of a proton or sodium gradient. F-type ATPases consist of two structural domains, F(1) containing the extramembraneous catalytic core and F(0) containing the membrane proton channel, linked together by a central stalk and a peripheral stalk. During catalysis, ATP synthesis in the catalytic domain of F(1) is coupled via a rotary mechanism of the central stalk subunits to proton translocation. In terms of biological role, key component of the F(0) channel; it plays a direct role in translocation across the membrane. A homomeric c-ring of between 10-14 subunits forms the central stalk rotor element with the F(1) delta and epsilon subunits. This Citrifermentans bemidjiense (strain ATCC BAA-1014 / DSM 16622 / JCM 12645 / Bem) (Geobacter bemidjiensis) protein is ATP synthase subunit c.